We begin with the raw amino-acid sequence, 423 residues long: MSDSKSDGQFYSVQVADSTFTVLKRYQQLKPIGSGAQGIVCAAFDTVLGINVAVKKLSRPFQNQTHAKRAYRELVLLKCVNHKNIISLLNVFTPQKTLEEFQDVYLVMELMDANLCQVIHMELDHERMSYLLYQMLCGIKHLHSAGIIHRDLKPSNIVVKSDCTLKILDFGLARTACTNFMMTPYVVTRYYRAPEVILGMGYKENVDIWSVGCIMGELVKGCVIFQGTDHIDQWNKVIEQLGTPSAEFMKKLQPTVRNYVENRPKYPGIKFEELFPDWIFPSESERDKIKTSQARDLLSKMLVIDPDKRISVDEALRHPYITVWYDPAEAEAPPPQIYDAQLEEREHAIEEWKELIYKEVMDWEERSKNGVKDQPSDAAVSSKATPSQSSSINDISSMSTEHTLASDTDSSLDASTGPLEGCR.

One can recognise a Protein kinase domain in the interval 26 to 321 (YQQLKPIGSG…VDEALRHPYI (296 aa)). Residues 32–40 (IGSGAQGIV) and Lys-55 each bind ATP. Residue Asp-151 is the Proton acceptor of the active site. The residue at position 183 (Thr-183) is a Phosphothreonine; by MAP2K7. The TXY signature appears at 183–185 (TPY). Tyr-185 bears the Phosphotyrosine; by MAP2K4 mark. Positions 366–375 (RSKNGVKDQP) are enriched in basic and acidic residues. The interval 366-423 (RSKNGVKDQPSDAAVSSKATPSQSSSINDISSMSTEHTLASDTDSSLDASTGPLEGCR) is disordered. Residues 387 to 416 (SQSSSINDISSMSTEHTLASDTDSSLDAST) are compositionally biased toward low complexity.

This sequence belongs to the protein kinase superfamily. CMGC Ser/Thr protein kinase family. MAP kinase subfamily. As to quaternary structure, interacts with MECOM. Binds to at least four scaffolding proteins, MAPK8IP1/JIP-1, MAPK8IP2/JIP-2, MAPK8IP3/JIP-3/JSAP1 and SPAG9/MAPK8IP4/JIP-4. These proteins also bind other components of the JNK signaling pathway. Interacts with NFATC4. Interacts with ATF7; the interaction does not phosphorylate ATF7 but acts as a docking site for ATF7-associated partners such as JUN. Interacts with BCL10. Interacts with CTNNB1 and GSK3B. Interacts with DCLK2. Interacts with MAPKBP1. Interacts with POU5F1; phosphorylates POU5F1 at 'Ser-347'. Found in a complex with SH3RF1, RAC2, MAP3K7/TAK1, MAP2K7/MKK7, MAPK8IP1/JIP1 and MAPK8/JNK1. It depends on Mg(2+) as a cofactor. In terms of processing, dually phosphorylated on Thr-183 and Tyr-185 by MAP2K7 and MAP2K4, which activates the enzyme. Autophosphorylated in vitro.

It is found in the cytoplasm. It localises to the nucleus. The enzyme catalyses L-seryl-[protein] + ATP = O-phospho-L-seryl-[protein] + ADP + H(+). The catalysed reaction is L-threonyl-[protein] + ATP = O-phospho-L-threonyl-[protein] + ADP + H(+). With respect to regulation, activated by threonine and tyrosine phosphorylation by either of two dual specificity kinases, MAP2K4 and MAP2K7. MAP2K4 shows a strong preference for Tyr-185 while MAP2K7 phosphorylates Tyr-183 preferentially. Inhibited by dual specificity phosphatases, such as DUSP1. Serine/threonine-protein kinase involved in various processes such as cell proliferation, differentiation, migration, transformation and programmed cell death. Extracellular stimuli such as pro-inflammatory cytokines or physical stress stimulate the stress-activated protein kinase/c-Jun N-terminal kinase (SAP/JNK) signaling pathway. In this cascade, two dual specificity kinases MAP2K4/MKK4 and MAP2K7/MKK7 phosphorylate and activate MAPK9/JNK2. In turn, MAPK9/JNK2 phosphorylates a number of transcription factors, primarily components of AP-1 such as JUN and ATF2 and thus regulates AP-1 transcriptional activity. In response to oxidative or ribotoxic stresses, inhibits rRNA synthesis by phosphorylating and inactivating the RNA polymerase 1-specific transcription initiation factor RRN3. Promotes stressed cell apoptosis by phosphorylating key regulatory factors including TP53 and YAP1. In T-cells, MAPK8 and MAPK9 are required for polarized differentiation of T-helper cells into Th1 cells. Upon T-cell receptor (TCR) stimulation, is activated by CARMA1, BCL10, MAP2K7 and MAP3K7/TAK1 to regulate JUN protein levels. Plays an important role in the osmotic stress-induced epithelial tight-junctions disruption. When activated, promotes beta-catenin/CTNNB1 degradation and inhibits the canonical Wnt signaling pathway. Also participates in neurite growth in spiral ganglion neurons. Phosphorylates the CLOCK-BMAL1 heterodimer and plays a role in the regulation of the circadian clock. Phosphorylates POU5F1, which results in the inhibition of POU5F1's transcriptional activity and enhances its proteasomal degradation. Phosphorylates ALKBH5 in response to reactive oxygen species (ROS), promoting ALKBH5 sumoylation and inactivation. The chain is Mitogen-activated protein kinase 9 (Mapk9) from Rattus norvegicus (Rat).